A 335-amino-acid polypeptide reads, in one-letter code: Glucokinase (335 aa).

Residue 11 to 16 coordinates ATP; it reads ADIGGT.

This sequence belongs to the bacterial glucokinase family.

The protein localises to the cytoplasm. The catalysed reaction is D-glucose + ATP = D-glucose 6-phosphate + ADP + H(+). This chain is Glucokinase, found in Xanthomonas campestris pv. campestris (strain 8004).